The primary structure comprises 267 residues: Strigolactone esterase RMS3 (267 aa).

The Nucleophile role is filled by Ser-96. Active-site residues include Asp-218 and His-247.

Belongs to the AB hydrolase superfamily.

The protein localises to the cytoplasm. Its subcellular location is the nucleus. Functionally, involved in strigolactone signaling pathway. Functions downstream of strigolactone synthesis, as a component of hormone signaling and as an enzyme that participates in the conversion of strigolactones to the bioactive form. Binds and hydrolyzes the synthetic strigolactone analog GR24 and its enantiomers in vitro. Forms a stable covalent complex with the D-ring of strigolactone, which is essential for hormone bioactivity. The D-ring is attached to His-247 of the catalytic triad. The hydrolysis of strigolactone into a covalently linked intermediate molecule is required to trigger strigolactone signaling. This mechanism defines RMS3 as a non-canonical hormone receptor with dual functions to generate and sense the active form of strigolactone. Strigolactones are hormones that inhibit tillering and shoot branching through the MAX-dependent pathway, contribute to the regulation of shoot architectural response to phosphate-limiting conditions and function as rhizosphere signal that stimulates hyphal branching of arbuscular mycorrhizal fungi and trigger seed germination of root parasitic weeds. This chain is Strigolactone esterase RMS3, found in Pisum sativum (Garden pea).